A 451-amino-acid chain; its full sequence is 23S rRNA (uracil(1939)-C(5))-methyltransferase RlmD (451 aa).

Residues 1–21 form a disordered region; sequence MAKHERGLRFQPTGGVKSVQI. Residues 20 to 78 enclose the TRAM domain; it reads QIPAGKKQRLSIERLSDDGRGIAFLEGKTWFVAGSLAGEEVEARVLNARGKVVEARTER. [4Fe-4S] cluster contacts are provided by cysteine 91, cysteine 97, cysteine 100, and cysteine 179. S-adenosyl-L-methionine-binding residues include glutamine 283, phenylalanine 312, asparagine 317, glutamate 333, aspartate 360, and aspartate 381. Cysteine 407 serves as the catalytic Nucleophile.

This sequence belongs to the class I-like SAM-binding methyltransferase superfamily. RNA M5U methyltransferase family. RlmD subfamily.

It catalyses the reaction uridine(1939) in 23S rRNA + S-adenosyl-L-methionine = 5-methyluridine(1939) in 23S rRNA + S-adenosyl-L-homocysteine + H(+). Functionally, catalyzes the formation of 5-methyl-uridine at position 1939 (m5U1939) in 23S rRNA. The polypeptide is 23S rRNA (uracil(1939)-C(5))-methyltransferase RlmD (Pseudomonas syringae pv. tomato (strain ATCC BAA-871 / DC3000)).